The primary structure comprises 836 residues: Protein translocase subunit SecA (836 aa).

ATP contacts are provided by residues Gln85, 103 to 107 (GEGKT), and Asp492. Positions 820, 822, 831, and 832 each coordinate Zn(2+).

The protein belongs to the SecA family. Monomer and homodimer. Part of the essential Sec protein translocation apparatus which comprises SecA, SecYEG and auxiliary proteins SecDF. Other proteins may also be involved. Zn(2+) serves as cofactor.

It is found in the cell membrane. The protein localises to the cytoplasm. The catalysed reaction is ATP + H2O + cellular proteinSide 1 = ADP + phosphate + cellular proteinSide 2.. Part of the Sec protein translocase complex. Interacts with the SecYEG preprotein conducting channel. Has a central role in coupling the hydrolysis of ATP to the transfer of proteins into and across the cell membrane, serving as an ATP-driven molecular motor driving the stepwise translocation of polypeptide chains across the membrane. The sequence is that of Protein translocase subunit SecA from Clostridium botulinum (strain Alaska E43 / Type E3).